We begin with the raw amino-acid sequence, 240 residues long: RNA transcription, translation and transport factor protein (240 aa).

The protein belongs to the RTRAF family. Homodimer. Component of a tRNA-splicing ligase complex.

It localises to the nucleus. It is found in the cytoplasm. Its subcellular location is the cytosol. The protein resides in the perinuclear region. The protein localises to the cytoskeleton. It localises to the microtubule organizing center. It is found in the centrosome. Its function is as follows. RNA-binding protein involved in modulation of mRNA transcription by Polymerase II. Component of the tRNA-splicing ligase complex. In Xenopus laevis (African clawed frog), this protein is RNA transcription, translation and transport factor protein.